The following is a 789-amino-acid chain: Zinc finger protein GLIS1 (789 aa).

Basic and acidic residues-rich tracts occupy residues 1 to 16 and 63 to 74; these read MHCEVAEALSDKRPKE and RAHDLLRPRSPR. 3 disordered regions span residues 1–29, 53–93, and 278–304; these read MHCEVAEALSDKRPKEAPGAPGQGRGPVS, LLPR…YGHS, and PPLPGDLGGPPKRSRPGPASSDGQEGS. Over residues 80–92 the composition is skewed to polar residues; that stretch reads KTGSGKVNGSYGH. A C2H2-type 1 zinc finger spans residues 366 to 391; the sequence is QACRWVDCCAAYEQQEELVRHIEKSH. The C2H2-type 2; atypical zinc finger occupies 400 to 427; it reads FTCFWAGCVRRYKPFNARYKLLIHMRVH. 3 consecutive C2H2-type zinc fingers follow at residues 433–457, 463–487, and 493–517; these read NKCMFEGCSKAFSRLENLKIHLRSH, YLCQHPGCQKAFSNSSDRAKHQRTH, and YACQIPGCSKRYTDPSSLRKHVKAH. 2 disordered regions span residues 506 to 529 and 573 to 684; these read DPSSLRKHVKAHSAKEQQVRKKLH and VYPG…QGYQ. The short motif at 511-527 is the Bipartite nuclear localization signal element; the sequence is RKHVKAHSAKEQQVRKK. Residues 648–658 are compositionally biased toward low complexity; sequence ASQSQSPGGQS.

The protein belongs to the GLI C2H2-type zinc-finger protein family. As to quaternary structure, interacts with KLF4. Interacts with POU5F1 and/or POU5F1B. Interacts with SOX2. In the adult, expressed highly in placenta and kidney and at lower levels in the testis, brain, colon, brown fat tissue and thymus. During embryo development, expressed in the frontal nasal region, branchial arches, somites, vibrissal and hair follicles, limb buds, craniofacial regions, ventral part of the tail, intervertebral disks, teeth, eyes and kidney.

The protein resides in the nucleus. Acts both as a repressor and an ctivator of transcription. Binds to the consensus sequence 5'-GACCACCCAC-3'. By controlling the expression of genes involved in cell differentiation inhibits the lineage commitment of multipotent cells. Prevents, for instance, the differentiation of multipotent mesenchymal cells into adipocyte and osteoblast. The protein is Zinc finger protein GLIS1 of Mus musculus (Mouse).